We begin with the raw amino-acid sequence, 28 residues long: Odorant-binding protein 1 (28 aa).

It belongs to the calycin superfamily. Lipocalin family. In terms of tissue distribution, nasal mucosa.

The protein localises to the secreted. It is found in the extracellular space. This soluble protein may play a specific role in odor discrimination and perception. In Hystrix cristata (North African crested porcupine), this protein is Odorant-binding protein 1.